We begin with the raw amino-acid sequence, 950 residues long: Xylosyltransferase 1 (950 aa).

The Cytoplasmic portion of the chain corresponds to 1–17; the sequence is MVAAPSARRLVRRSHSA. A helical; Signal-anchor for type II membrane protein membrane pass occupies residues 18–38; sequence LLAALTVLLLQTLVGWNFSSL. Residues 39–950 are Lumenal-facing; it reads HSGAGERRGG…GAVKPDGRLR (912 aa). A disordered region spans residues 42 to 246; it reads AGERRGGAAA…ELRYDQPPKC (205 aa). Low complexity predominate over residues 91–104; the sequence is PPARARARALAGCP. Residues 134–150 are compositionally biased toward basic and acidic residues; it reads KVRTDSNNENSVPKDFE. Polar residues predominate over residues 152-161; that stretch reads VDNSNFAPRT. Residues 166-193 are compositionally biased toward basic and acidic residues; it reads HQPELAKKPPSRQKELLKRRLEQEEKGK. An N-linked (GlcNAc...) asparagine glycan is attached at N215. 4 disulfide bridges follow: C246–C274, C290–C531, C550–C563, and C552–C561. Residues V322, D350, and 379–381 each bind UDP-alpha-D-xylose; that span reads TIW. N410 is a glycosylation site (N-linked (GlcNAc...) asparagine). 483–484 provides a ligand contact to UDP-alpha-D-xylose; it reads DW. Residues S564 and 587–588 contribute to the UDP-alpha-D-xylose site; that span reads RK. 2 disulfide bridges follow: C664–C918 and C911–C924. N768 carries N-linked (GlcNAc...) asparagine glycosylation. The segment at 931–950 is disordered; that stretch reads SFSPDPKSELGAVKPDGRLR.

Belongs to the glycosyltransferase 14 family. XylT subfamily. Monomer. A divalent metal cation is required as a cofactor. In terms of processing, contains 7 disulfide bonds. Post-translationally, N-glycosylated.

It is found in the golgi apparatus membrane. The catalysed reaction is UDP-alpha-D-xylose + L-seryl-[protein] = 3-O-(beta-D-xylosyl)-L-seryl-[protein] + UDP + H(+). It participates in glycan metabolism; chondroitin sulfate biosynthesis. It functions in the pathway glycan metabolism; heparan sulfate biosynthesis. In terms of biological role, catalyzes the first step in the biosynthesis of chondroitin sulfate and dermatan sulfate proteoglycans, such as DCN. Transfers D-xylose from UDP-D-xylose to specific serine residues of the core protein. Required for normal maturation of chondrocytes during bone development, normal onset of ossification and normal embryonic and postnatal skeleton development, especially of the long bones. In Canis lupus familiaris (Dog), this protein is Xylosyltransferase 1 (XYLT1).